Here is a 270-residue protein sequence, read N- to C-terminus: Glutamate racemase (270 aa).

Residues 7–8 (DS) and 39–40 (YG) each bind substrate. Cysteine 70 serves as the catalytic Proton donor/acceptor. Residue 71-72 (NT) participates in substrate binding. Catalysis depends on cysteine 194, which acts as the Proton donor/acceptor. 195-196 (TH) contacts substrate.

This sequence belongs to the aspartate/glutamate racemases family.

It catalyses the reaction L-glutamate = D-glutamate. It functions in the pathway cell wall biogenesis; peptidoglycan biosynthesis. Provides the (R)-glutamate required for cell wall biosynthesis. The sequence is that of Glutamate racemase from Paracoccus denitrificans (strain Pd 1222).